The following is a 498-amino-acid chain: ATP synthase subunit beta, chloroplastic (498 aa).

172-179 contacts ATP; it reads GGAGVGKT.

The protein belongs to the ATPase alpha/beta chains family. In terms of assembly, F-type ATPases have 2 components, CF(1) - the catalytic core - and CF(0) - the membrane proton channel. CF(1) has five subunits: alpha(3), beta(3), gamma(1), delta(1), epsilon(1). CF(0) has four main subunits: a(1), b(1), b'(1) and c(9-12).

It is found in the plastid. The protein localises to the chloroplast thylakoid membrane. The enzyme catalyses ATP + H2O + 4 H(+)(in) = ADP + phosphate + 5 H(+)(out). Functionally, produces ATP from ADP in the presence of a proton gradient across the membrane. The catalytic sites are hosted primarily by the beta subunits. In Phoenix dactylifera (Date palm), this protein is ATP synthase subunit beta, chloroplastic.